A 228-amino-acid chain; its full sequence is 2,3-bisphosphoglycerate-dependent phosphoglycerate mutase (228 aa).

Residues 8 to 15 (RHGQSEWN), 21 to 22 (TG), Arg-60, 87 to 90 (ERHY), Lys-98, 114 to 115 (RR), and 183 to 184 (GN) each bind substrate. Residue His-9 is the Tele-phosphohistidine intermediate of the active site. Glu-87 functions as the Proton donor/acceptor in the catalytic mechanism.

The protein belongs to the phosphoglycerate mutase family. BPG-dependent PGAM subfamily.

The enzyme catalyses (2R)-2-phosphoglycerate = (2R)-3-phosphoglycerate. Its pathway is carbohydrate degradation; glycolysis; pyruvate from D-glyceraldehyde 3-phosphate: step 3/5. Its function is as follows. Catalyzes the interconversion of 2-phosphoglycerate and 3-phosphoglycerate. The chain is 2,3-bisphosphoglycerate-dependent phosphoglycerate mutase from Staphylococcus epidermidis (strain ATCC 35984 / DSM 28319 / BCRC 17069 / CCUG 31568 / BM 3577 / RP62A).